Here is a 171-residue protein sequence, read N- to C-terminus: Peptide deformylase (171 aa).

Fe cation-binding residues include C91 and H133. E134 is an active-site residue. H137 lines the Fe cation pocket.

This sequence belongs to the polypeptide deformylase family. Requires Fe(2+) as cofactor.

It catalyses the reaction N-terminal N-formyl-L-methionyl-[peptide] + H2O = N-terminal L-methionyl-[peptide] + formate. Removes the formyl group from the N-terminal Met of newly synthesized proteins. Requires at least a dipeptide for an efficient rate of reaction. N-terminal L-methionine is a prerequisite for activity but the enzyme has broad specificity at other positions. This is Peptide deformylase from Hamiltonella defensa subsp. Acyrthosiphon pisum (strain 5AT).